We begin with the raw amino-acid sequence, 241 residues long: Uracil-DNA glycosylase (241 aa).

Asp-71 serves as the catalytic Proton acceptor.

The protein belongs to the uracil-DNA glycosylase (UDG) superfamily. UNG family.

The protein localises to the cytoplasm. The enzyme catalyses Hydrolyzes single-stranded DNA or mismatched double-stranded DNA and polynucleotides, releasing free uracil.. Functionally, excises uracil residues from the DNA which can arise as a result of misincorporation of dUMP residues by DNA polymerase or due to deamination of cytosine. This is Uracil-DNA glycosylase from Xanthomonas campestris pv. campestris (strain 8004).